Reading from the N-terminus, the 921-residue chain is Protein translocase subunit SecA (921 aa).

Residues Q85, 103 to 107, and D514 contribute to the ATP site; that span reads GEGKT. Residues C905, C907, C916, and H917 each contribute to the Zn(2+) site.

The protein belongs to the SecA family. As to quaternary structure, monomer and homodimer. Part of the essential Sec protein translocation apparatus which comprises SecA, SecYEG and auxiliary proteins SecDF-YajC and YidC. The cofactor is Zn(2+).

It localises to the cell inner membrane. Its subcellular location is the cytoplasm. It catalyses the reaction ATP + H2O + cellular proteinSide 1 = ADP + phosphate + cellular proteinSide 2.. Its function is as follows. Part of the Sec protein translocase complex. Interacts with the SecYEG preprotein conducting channel. Has a central role in coupling the hydrolysis of ATP to the transfer of proteins into and across the cell membrane, serving both as a receptor for the preprotein-SecB complex and as an ATP-driven molecular motor driving the stepwise translocation of polypeptide chains across the membrane. The sequence is that of Protein translocase subunit SecA from Herminiimonas arsenicoxydans.